Reading from the N-terminus, the 452-residue chain is Probable phosphoglucosamine mutase (452 aa).

S96 serves as the catalytic Phosphoserine intermediate. The Mg(2+) site is built by S96, D235, D237, and D239. S96 carries the post-translational modification Phosphoserine.

The protein belongs to the phosphohexose mutase family. It depends on Mg(2+) as a cofactor. Post-translationally, activated by phosphorylation.

The catalysed reaction is alpha-D-glucosamine 1-phosphate = D-glucosamine 6-phosphate. Functionally, catalyzes the conversion of glucosamine-6-phosphate to glucosamine-1-phosphate. In Methanopyrus kandleri (strain AV19 / DSM 6324 / JCM 9639 / NBRC 100938), this protein is Probable phosphoglucosamine mutase.